Here is a 414-residue protein sequence, read N- to C-terminus: Tryptophan synthase beta chain (414 aa).

Residue Lys-105 is modified to N6-(pyridoxal phosphate)lysine.

This sequence belongs to the TrpB family. Tetramer of two alpha and two beta chains. It depends on pyridoxal 5'-phosphate as a cofactor.

The enzyme catalyses (1S,2R)-1-C-(indol-3-yl)glycerol 3-phosphate + L-serine = D-glyceraldehyde 3-phosphate + L-tryptophan + H2O. It participates in amino-acid biosynthesis; L-tryptophan biosynthesis; L-tryptophan from chorismate: step 5/5. Its function is as follows. The beta subunit is responsible for the synthesis of L-tryptophan from indole and L-serine. The chain is Tryptophan synthase beta chain from Gloeobacter violaceus (strain ATCC 29082 / PCC 7421).